A 227-amino-acid polypeptide reads, in one-letter code: UPF0688 protein C1orf174 homolog (227 aa).

Disordered regions lie at residues 1 to 122 (MRKR…VSDL) and 207 to 227 (AKEEDEDDDDYVDGLANEGNI). The segment covering 47–63 (TEKESSKKLRKDEKGPV) has biased composition (basic and acidic residues). Polar residues-rich tracts occupy residues 77–104 (AASNESSNVNDSQQSEKSITNTKDNGTR) and 113–122 (RLPSSPVSDL).

This sequence belongs to the UPF0688 family.

It localises to the nucleus. This chain is UPF0688 protein C1orf174 homolog, found in Xenopus tropicalis (Western clawed frog).